The primary structure comprises 854 residues: DNA mismatch repair protein MutS (854 aa).

616-623 (GPNMGGKS) serves as a coordination point for ATP.

This sequence belongs to the DNA mismatch repair MutS family.

This protein is involved in the repair of mismatches in DNA. It is possible that it carries out the mismatch recognition step. This protein has a weak ATPase activity. The protein is DNA mismatch repair protein MutS of Pectobacterium atrosepticum (strain SCRI 1043 / ATCC BAA-672) (Erwinia carotovora subsp. atroseptica).